A 269-amino-acid chain; its full sequence is Capsid assembly scaffolding protein (269 aa).

Belongs to the T4likevirus capsid assembly scaffolding protein family.

It localises to the virion. Its function is as follows. Scaffolding protein involved in the icosahedric procapsid assembly. Coassembles with the capsid proteins to form the procapsid, in which the scaffolding protein is found within the external shell of icosahedrally arranged capsid protein subunits. In a subsequent step the scaffolding protein molecules are cleaved by the viral protease and released, except for the internal peptide VII. Functionally, cleavage product of Gp22 that is incorporated into the mature phage head. The polypeptide is Capsid assembly scaffolding protein (22) (Escherichia phage AR1 (Bacteriophage AR1)).